The sequence spans 192 residues: Ion-translocating oxidoreductase complex subunit B (192 aa).

The tract at residues 1-26 (MNAIWIAVAAVSLLGLAFGAILGYAS) is hydrophobic. The 60-residue stretch at 32-91 (EDDPVVEKIDEILPQSQCGQCGYPGCRPYAEAISCNGEKINRCAPGGEAVMLKIAELLNV) folds into the 4Fe-4S domain. Positions 49, 52, 57, 74, 117, 120, 123, 127, 147, 150, 153, and 157 each coordinate [4Fe-4S] cluster. 4Fe-4S ferredoxin-type domains lie at 108 to 137 (MVAVIDENNCIGCTKCIQACPVDAIVGATR) and 138 to 167 (AMHTVMSDLCTGCNLCVDPCPTHCISLQPV).

The protein belongs to the 4Fe4S bacterial-type ferredoxin family. RnfB subfamily. The complex is composed of six subunits: RsxA, RsxB, RsxC, RsxD, RsxE and RsxG. Requires [4Fe-4S] cluster as cofactor.

The protein resides in the cell inner membrane. Its function is as follows. Part of a membrane-bound complex that couples electron transfer with translocation of ions across the membrane. Required to maintain the reduced state of SoxR. The chain is Ion-translocating oxidoreductase complex subunit B from Shigella dysenteriae serotype 1 (strain Sd197).